The primary structure comprises 212 residues: MGSITRALPLLLLLLLCAHGTASQHHLRLRPLPSEGLPVPDLIENPDPEHDPREQDLSEKTLLKKLGSNFDANFMSIHLPAQLNASAPPELPRLPMPAELKKLDLTETPYGRRVKVGKKARRKFLQWLWMYTHCPVLYTWKDLGLRFWPRYIKEGNCFSERSCSFPEGMSCKPVKAVTKTFLRWYCQGFMRQKYCTWIQVQYPIISQCKCSC.

The N-terminal stretch at 1-23 is a signal peptide; that stretch reads MGSITRALPLLLLLLLCAHGTAS. Residues 37-56 are disordered; that stretch reads LPVPDLIENPDPEHDPREQD. The span at 47-56 shows a compositional bias: basic and acidic residues; sequence DPEHDPREQD. Asn-84 carries N-linked (GlcNAc...) asparagine glycosylation.

This sequence belongs to the noggin family. In terms of assembly, homodimer; disulfide-linked.

The protein resides in the secreted. In terms of biological role, inhibitor of bone morphogenetic proteins (BMP) signaling. The polypeptide is Noggin-2 (nog2) (Danio rerio (Zebrafish)).